Consider the following 401-residue polypeptide: 26S proteasome regulatory subunit 6A (401 aa).

189–196 is an ATP binding site; the sequence is GPPGTGKT.

The protein belongs to the AAA ATPase family. As to quaternary structure, the 26S proteasome consists of a 20S proteasome core and two 19S regulatory subunits. The 20S proteasome core is composed of 28 subunits that are arranged in four stacked rings, resulting in a barrel-shaped structure. The two end rings are each formed by seven alpha subunits, and the two central rings are each formed by seven beta subunits. The catalytic chamber with the active sites is on the inside of the barrel.

It localises to the cytoplasm. Its subcellular location is the nucleus. In terms of biological role, acts as a regulatory subunit of the 26S proteasome which degrades poly-ubiquitinated proteins in the cytoplasm and in the nucleus. It is essential for the regulated turnover of proteins and for the removal of misfolded proteins. The proteasome is a multicatalytic proteinase complex that is characterized by its ability to cleave peptides with Arg, Phe, Tyr, Leu, and Glu adjacent to the leaving group at neutral or slightly basic pH. The chain is 26S proteasome regulatory subunit 6A (RPT5) from Encephalitozoon cuniculi (strain GB-M1) (Microsporidian parasite).